The following is a 352-amino-acid chain: Putative squamosa promoter-binding-like protein 19 (352 aa).

Positions 68–88 (AAAPATRRARGGSGGGGGGGG) are disordered. The span at 78–88 (GGSGGGGGGGG) shows a compositional bias: gly residues. The segment at 90–167 (AEACSVDGCR…DGHNRRRRKP (78 aa)) adopts an SBP-type zinc-finger fold. Residues Cys-93, Cys-98, Cys-115, His-118, Cys-134, Cys-137, His-141, and Cys-153 each coordinate Zn(2+). Positions 150-166 (KKSCRKRLDGHNRRRRK) match the Bipartite nuclear localization signal motif. The segment at 152–174 (SCRKRLDGHNRRRRKPQHDALNP) is disordered.

It is found in the nucleus. In terms of biological role, trans-acting factor that binds specifically to the consensus nucleotide sequence 5'-TNCGTACAA-3'. This is Putative squamosa promoter-binding-like protein 19 (SPL19) from Oryza sativa subsp. japonica (Rice).